Consider the following 85-residue polypeptide: MAPPLSPGSRALIALIRVYQRLISPLLGPHCRFTPTCSSYGIEALRRFGVIKGSWLTVKRVLKCHPLHPGGDDPVPPGPFDTREH.

The protein belongs to the UPF0161 family.

It localises to the cell inner membrane. In terms of biological role, could be involved in insertion of integral membrane proteins into the membrane. This chain is Putative membrane protein insertion efficiency factor, found in Escherichia coli O6:H1 (strain CFT073 / ATCC 700928 / UPEC).